The primary structure comprises 162 residues: Sec-independent protein translocase protein TatB (162 aa).

The helical transmembrane segment at 1 to 21 (MFDIGFSELILIFVVGLVVLG) threads the bilayer. The disordered stretch occupies residues 136–162 (LTAYYPPDDDLVSPSTTKLEQDKQNVN).

Belongs to the TatB family. In terms of assembly, the Tat system comprises two distinct complexes: a TatABC complex, containing multiple copies of TatA, TatB and TatC subunits, and a separate TatA complex, containing only TatA subunits. Substrates initially bind to the TatABC complex, which probably triggers association of the separate TatA complex to form the active translocon.

It is found in the cell inner membrane. In terms of biological role, part of the twin-arginine translocation (Tat) system that transports large folded proteins containing a characteristic twin-arginine motif in their signal peptide across membranes. Together with TatC, TatB is part of a receptor directly interacting with Tat signal peptides. TatB may form an oligomeric binding site that transiently accommodates folded Tat precursor proteins before their translocation. The sequence is that of Sec-independent protein translocase protein TatB from Haemophilus ducreyi (strain 35000HP / ATCC 700724).